A 943-amino-acid polypeptide reads, in one-letter code: Translation initiation factor IF-2 (943 aa).

The interval 29–349 (LSVKSHSSSV…NNRGNSAPKL (321 aa)) is disordered. 5 stretches are compositionally biased toward basic and acidic residues: residues 69 to 82 (PKEE…DKAS), 112 to 137 (FKAE…DNRN), 145 to 155 (QGKRHNNDRRN), 163 to 196 (DHNK…RDNA), and 224 to 253 (RQSE…EKQQ). Over residues 254 to 266 (AEVAVQKAAAETK) the composition is skewed to low complexity. The span at 296-309 (KSRDNHRVNEDGPK) shows a compositional bias: basic and acidic residues. Residues 313–332 (NNKWNNQNQVRNQRNSNWNK) show a composition bias toward low complexity. The tr-type G domain occupies 445–614 (ERAPVVTIMG…LLVAEVEELK (170 aa)). Residues 454 to 461 (GHVDHGKT) are G1. 454–461 (GHVDHGKT) serves as a coordination point for GTP. A G2 region spans residues 479–483 (GITQH). Residues 500 to 503 (DTPG) form a G3 region. Residues 500–504 (DTPGH) and 554–557 (NKID) contribute to the GTP site. Positions 554-557 (NKID) are G4. Positions 590-592 (SAK) are G5.

This sequence belongs to the TRAFAC class translation factor GTPase superfamily. Classic translation factor GTPase family. IF-2 subfamily.

Its subcellular location is the cytoplasm. Its function is as follows. One of the essential components for the initiation of protein synthesis. Protects formylmethionyl-tRNA from spontaneous hydrolysis and promotes its binding to the 30S ribosomal subunits. Also involved in the hydrolysis of GTP during the formation of the 70S ribosomal complex. In Streptococcus thermophilus (strain ATCC BAA-491 / LMD-9), this protein is Translation initiation factor IF-2.